An 84-amino-acid chain; its full sequence is Small ribosomal subunit protein eS27-like (84 aa).

Residues 1–16 (MPLARDLLHPSLDEEK) are compositionally biased toward basic and acidic residues. Residues 1–23 (MPLARDLLHPSLDEEKKKHKKKR) form a disordered region. The C4-type zinc finger occupies 38 to 60 (PGCYKITTVFSHAQTVVLCVGCS).

This sequence belongs to the eukaryotic ribosomal protein eS27 family. It depends on Zn(2+) as a cofactor.

This chain is Small ribosomal subunit protein eS27-like (RPS27L), found in Bos taurus (Bovine).